A 577-amino-acid polypeptide reads, in one-letter code: Arginine--tRNA ligase (577 aa).

The short motif at 122–132 is the 'HIGH' region element; that stretch reads PNVAKEMHVGH.

The protein belongs to the class-I aminoacyl-tRNA synthetase family. Monomer.

It localises to the cytoplasm. It carries out the reaction tRNA(Arg) + L-arginine + ATP = L-arginyl-tRNA(Arg) + AMP + diphosphate. The polypeptide is Arginine--tRNA ligase (Escherichia coli O81 (strain ED1a)).